A 385-amino-acid chain; its full sequence is ELAV-like protein 4 (385 aa).

Residues 12 to 48 (TMEPQVSNGPTSNTSNGPSSNNRNCPSPMQTGATTDD) are disordered. The span at 18-33 (SNGPTSNTSNGPSSNN) shows a compositional bias: low complexity. The span at 34–48 (RNCPSPMQTGATTDD) shows a compositional bias: polar residues. Ser-38 carries the post-translational modification Phosphoserine. 2 consecutive RRM domains span residues 51–129 (TNLI…YARP) and 137–217 (ANLY…FANN). Ser-233 is subject to Phosphoserine. An Asymmetric dimethylarginine; by CARM1; alternate modification is found at Arg-248. At Arg-248 the chain carries Omega-N-methylarginine; by CARM1; alternate. Residues 302–380 (WCIFVYNLSP…RVLQVSFKTN (79 aa)) enclose the RRM 3 domain.

Belongs to the RRM elav family. In terms of assembly, component of a TAU mRNP complex, at least composed of IGF2BP1, ELAVL4 and G3BP. Associates with the EIF4F cap-binding complex, composed of EIF4G, EIF4A, EIF4E and PABP. Within the EIF4F cap-binding complex, interacts with EIF4A. Interacts with SMN (via Tudor domain) in an RNA-independent manner; the interaction is required for localization of ELAVL4 to RNA granules. Interacts with MAP1 light chain LC1 (via C-terminus); the interaction contributes to the association of ELAVL4 with microtubules. Interacts with MAP1 light chain LC2. Methylated by CARM1, which leads to reduced RNA-binding activity and enhanced interaction with SMN. Methylation at Arg-248 by CARM1 weakens protective binding to the 3'UTR of CDKN1A mRNA and down-regulates CDKN1A protein expression, thereby maintaining cells in a proliferative state. Methylation is inhibited by NGF, which facilitates neurite outgrowth. Expressed in pancreatic beta cells (at protein level). Expressed in the brain.

The protein localises to the cytoplasm. Its subcellular location is the perikaryon. The protein resides in the cell projection. It is found in the dendrite. It localises to the axon. The protein localises to the growth cone. Its function is as follows. RNA-binding protein that is involved in the post-transcriptional regulation of mRNAs. Plays a role in the regulation of mRNA stability, alternative splicing and translation. Binds to AU-rich element (ARE) sequences in the 3' untranslated region (UTR) of target mRNAs, including GAP43, VEGF, FOS, CDKN1A and ACHE mRNA. Many of the target mRNAs are coding for RNA-binding proteins, transcription factors and proteins involved in RNA processing and/or neuronal development and function. By binding to the mRNA 3'UTR, decreases mRNA deadenylation and thereby contributes to the stabilization of mRNA molecules and their protection from decay. Also binds to the polyadenylated (poly(A)) tail in the 3'UTR of mRNA, thereby increasing its affinity for mRNA binding. Mainly plays a role in neuron-specific RNA processing by stabilization of mRNAs such as GAP43, ACHE and mRNAs of other neuronal proteins, thereby contributing to the differentiation of neural progenitor cells, nervous system development, learning and memory mechanisms. Involved in the negative regulation of the proliferative activity of neuronal stem cells and in the positive regulation of neuronal differentiation of neural progenitor cells. Promotes neuronal differentiation of neural stem/progenitor cells in the adult subventricular zone of the hippocampus by binding to and stabilizing SATB1 mRNA. Binds and stabilizes MSI1 mRNA in neural stem cells. Exhibits increased binding to ACHE mRNA during neuronal differentiation, thereby stabilizing ACHE mRNA and enhancing its expression. Protects CDKN1A mRNA from decay by binding to its 3'-UTR. May bind to APP and BACE1 mRNAS and the BACE1AS lncRNA and enhance their stabilization. Plays a role in neurite outgrowth and in the establishment and maturation of dendritic arbors, thereby contributing to neocortical and hippocampal circuitry function. Stabilizes GAP43 mRNA and protects it from decay during postembryonic development in the brain. By promoting the stabilization of GAP43 mRNA, plays a role in NGF-mediated neurite outgrowth. Binds to BDNF long 3'UTR mRNA, thereby leading to its stabilization and increased dendritic translation after activation of PKC. By increasing translation of BDNF after nerve injury, may contribute to nerve regeneration. Acts as a stabilizing factor by binding to the 3'UTR of NOVA1 mRNA, thereby increasing its translation and enhancing its functional activity in neuron-specific splicing. Stimulates translation of mRNA in a poly(A)- and cap-dependent manner, possibly by associating with the EIF4F cap-binding complex. May also negatively regulate translation by binding to the 5'UTR of Ins2 mRNA, thereby repressing its translation. Upon glucose stimulation, Ins2 mRNA is released from ELAVL4 and translational inhibition is abolished. Also plays a role in the regulation of alternative splicing. May regulate alternative splicing of CALCA pre-mRNA into Calcitonin and Calcitonin gene-related peptide 1 (CGRP) by competing with splicing regulator TIAR for binding to U-rich intronic sequences of CALCA pre-mRNA. This is ELAV-like protein 4 (ELAVL4) from Homo sapiens (Human).